The primary structure comprises 142 residues: Hydrogenase maturation factor HypA (142 aa).

Residue histidine 2 participates in Ni(2+) binding. Positions 73, 76, 109, and 112 each coordinate Zn(2+).

The protein belongs to the HypA/HybF family.

In terms of biological role, involved in the maturation of [NiFe] hydrogenases. Required for nickel insertion into the metal center of the hydrogenase. The sequence is that of Hydrogenase maturation factor HypA from Methanopyrus kandleri (strain AV19 / DSM 6324 / JCM 9639 / NBRC 100938).